The sequence spans 240 residues: Ribitol-5-phosphate cytidylyltransferase (240 aa).

Residues 8-11 (FAGG) and 81-87 (GETGQMS) contribute to the CTP site.

Belongs to the IspD/TarI cytidylyltransferase family. TarI subfamily.

The enzyme catalyses D-ribitol 5-phosphate + CTP + H(+) = CDP-L-ribitol + diphosphate. Its pathway is cell wall biogenesis; poly(ribitol phosphate) teichoic acid biosynthesis. Functionally, catalyzes the transfer of the cytidylyl group of CTP to D-ribitol 5-phosphate. In Streptococcus agalactiae serotype V (strain ATCC BAA-611 / 2603 V/R), this protein is Ribitol-5-phosphate cytidylyltransferase.